Here is a 354-residue protein sequence, read N- to C-terminus: Fructose-bisphosphate aldolase (354 aa).

Ser61 contacts D-glyceraldehyde 3-phosphate. Asp104 serves as the catalytic Proton donor. Residues His105, Asp139, Glu169, and His221 each contribute to the Zn(2+) site. Gly222 serves as a coordination point for dihydroxyacetone phosphate. His260 lines the Zn(2+) pocket. Residues 261–263 (GGS) and 282–285 (NIDT) contribute to the dihydroxyacetone phosphate site.

Belongs to the class II fructose-bisphosphate aldolase family. As to quaternary structure, homodimer. Zn(2+) is required as a cofactor.

It carries out the reaction beta-D-fructose 1,6-bisphosphate = D-glyceraldehyde 3-phosphate + dihydroxyacetone phosphate. The protein operates within carbohydrate degradation; glycolysis; D-glyceraldehyde 3-phosphate and glycerone phosphate from D-glucose: step 4/4. In terms of biological role, catalyzes the aldol condensation of dihydroxyacetone phosphate (DHAP or glycerone-phosphate) with glyceraldehyde 3-phosphate (G3P) to form fructose 1,6-bisphosphate (FBP) in gluconeogenesis and the reverse reaction in glycolysis. The chain is Fructose-bisphosphate aldolase (fba) from Campylobacter jejuni subsp. jejuni serotype O:2 (strain ATCC 700819 / NCTC 11168).